Consider the following 508-residue polypeptide: Steroid 17-alpha-hydroxylase/17,20 lyase (508 aa).

Asn202 is a binding site for substrate. Position 442 (Cys442) interacts with heme.

It belongs to the cytochrome P450 family. It depends on heme as a cofactor.

It is found in the endoplasmic reticulum membrane. The protein localises to the microsome membrane. It carries out the reaction a C21-steroid + reduced [NADPH--hemoprotein reductase] + O2 = a 17alpha-hydroxy-C21-steroid + oxidized [NADPH--hemoprotein reductase] + H2O + H(+). The enzyme catalyses progesterone + reduced [NADPH--hemoprotein reductase] + O2 = 17alpha-hydroxyprogesterone + oxidized [NADPH--hemoprotein reductase] + H2O + H(+). The catalysed reaction is pregnenolone + reduced [NADPH--hemoprotein reductase] + O2 = 17alpha-hydroxypregnenolone + oxidized [NADPH--hemoprotein reductase] + H2O + H(+). It catalyses the reaction 17alpha-hydroxyprogesterone + reduced [NADPH--hemoprotein reductase] + O2 = androst-4-ene-3,17-dione + acetate + oxidized [NADPH--hemoprotein reductase] + H2O + 2 H(+). It carries out the reaction 17alpha-hydroxyprogesterone + reduced [NADPH--hemoprotein reductase] + O2 = 16alpha,17alpha-dihydroxyprogesterone + oxidized [NADPH--hemoprotein reductase] + H2O + H(+). The enzyme catalyses 16alpha,17alpha-dihydroxyprogesterone + reduced [NADPH--hemoprotein reductase] + O2 = 6beta,16alpha,17alpha-trihydroxyprogesterone + oxidized [NADPH--hemoprotein reductase] + H2O + H(+). The catalysed reaction is 17alpha-hydroxypregnenolone + reduced [NADPH--hemoprotein reductase] + O2 = 3beta-hydroxyandrost-5-en-17-one + acetate + oxidized [NADPH--hemoprotein reductase] + H2O + 2 H(+). It catalyses the reaction 16alpha,17alpha-dihydroxypregnenolone + reduced [NADPH--hemoprotein reductase] + O2 = 3beta,16alpha-dihydroxy-androst-5-en-17-one + acetate + oxidized [NADPH--hemoprotein reductase] + H2O + 2 H(+). It carries out the reaction 3beta-hydroxyandrost-5-en-17-one + reduced [NADPH--hemoprotein reductase] + O2 = 3beta,16alpha-dihydroxy-androst-5-en-17-one + oxidized [NADPH--hemoprotein reductase] + H2O + H(+). The enzyme catalyses androst-4-ene-3,17-dione + reduced [NADPH--hemoprotein reductase] + O2 = 16alpha-hydroxyandrost-4-ene-3,17-dione + oxidized [NADPH--hemoprotein reductase] + H2O + H(+). The protein operates within steroid hormone biosynthesis. Its pathway is steroid biosynthesis; glucocorticoid biosynthesis. Regulated predominantly by intracellular cAMP levels. The 17,20-lyase activity is stimulated by cytochrome b5, which acts as an allosteric effector increasing the Vmax of the lyase activity. In terms of biological role, a cytochrome P450 monooxygenase involved in corticoid and androgen biosynthesis. Catalyzes 17-alpha hydroxylation of C21 steroids, which is common for both pathways. A second oxidative step, required only for androgen synthesis, involves an acyl-carbon cleavage. The 17-alpha hydroxy intermediates, as part of adrenal glucocorticoids biosynthesis pathway, are precursors of cortisol. Hydroxylates steroid hormones, pregnenolone and progesterone to form 17-alpha hydroxy metabolites, followed by the cleavage of the C17-C20 bond to form C19 steroids, dehydroepiandrosterone (DHEA) and androstenedione. Has 16-alpha hydroxylase activity. Catalyzes 16-alpha hydroxylation of 17-alpha hydroxy pregnenolone, followed by the cleavage of the C17-C20 bond to form 16-alpha-hydroxy DHEA. Also 16-alpha hydroxylates androgens, relevant for estriol synthesis. Mechanistically, uses molecular oxygen inserting one oxygen atom into a substrate, and reducing the second into a water molecule, with two electrons provided by NADPH via cytochrome P450 reductase (CPR; NADPH-ferrihemoprotein reductase). In Felis catus (Cat), this protein is Steroid 17-alpha-hydroxylase/17,20 lyase (CYP17A1).